A 331-amino-acid chain; its full sequence is Probable transaldolase (331 aa).

The active-site Schiff-base intermediate with substrate is the Lys-142.

The protein belongs to the transaldolase family. Type 1 subfamily. Homodimer.

The protein localises to the cytoplasm. It catalyses the reaction D-sedoheptulose 7-phosphate + D-glyceraldehyde 3-phosphate = D-erythrose 4-phosphate + beta-D-fructose 6-phosphate. It participates in carbohydrate degradation; pentose phosphate pathway; D-glyceraldehyde 3-phosphate and beta-D-fructose 6-phosphate from D-ribose 5-phosphate and D-xylulose 5-phosphate (non-oxidative stage): step 2/3. Transaldolase is important for the balance of metabolites in the pentose-phosphate pathway. The polypeptide is Probable transaldolase (Drosophila melanogaster (Fruit fly)).